The chain runs to 86 residues: Large ribosomal subunit protein bL27 (86 aa).

A disordered region spans residues 1–24 (MAHKKGTGSTRNGRDSNSKRLGVK).

It belongs to the bacterial ribosomal protein bL27 family.

This Prochlorococcus marinus (strain MIT 9301) protein is Large ribosomal subunit protein bL27.